The sequence spans 249 residues: Deoxyribose-phosphate aldolase (249 aa).

Asp-94 serves as the catalytic Proton donor/acceptor. Lys-158 acts as the Schiff-base intermediate with acetaldehyde in catalysis. Lys-200 acts as the Proton donor/acceptor in catalysis.

Belongs to the DeoC/FbaB aldolase family. DeoC type 1 subfamily.

The protein localises to the cytoplasm. It carries out the reaction 2-deoxy-D-ribose 5-phosphate = D-glyceraldehyde 3-phosphate + acetaldehyde. It participates in carbohydrate degradation; 2-deoxy-D-ribose 1-phosphate degradation; D-glyceraldehyde 3-phosphate and acetaldehyde from 2-deoxy-alpha-D-ribose 1-phosphate: step 2/2. Its function is as follows. Catalyzes a reversible aldol reaction between acetaldehyde and D-glyceraldehyde 3-phosphate to generate 2-deoxy-D-ribose 5-phosphate. The polypeptide is Deoxyribose-phosphate aldolase (Thermoplasma volcanium (strain ATCC 51530 / DSM 4299 / JCM 9571 / NBRC 15438 / GSS1)).